A 459-amino-acid chain; its full sequence is Glycosyl hydrolase family 109 protein (459 aa).

The segment at residues 1 to 31 (MHNIHRRNFLKAAGAATAGLVTANIALNAYA) is a signal peptide (tat-type signal). NAD(+)-binding positions include 64–65 (ER), Asp-86, 135–138 (WEWH), 155–156 (EV), and Asn-184. Substrate contacts are provided by residues Tyr-213, Arg-232, 244 to 247 (YPTH), and Tyr-326. Position 244 (Tyr-244) interacts with NAD(+).

This sequence belongs to the Gfo/Idh/MocA family. Glycosyl hydrolase 109 subfamily. The cofactor is NAD(+). Predicted to be exported by the Tat system. The position of the signal peptide cleavage has not been experimentally proven.

Glycosidase. The chain is Glycosyl hydrolase family 109 protein from Shewanella baltica (strain OS155 / ATCC BAA-1091).